A 211-amino-acid polypeptide reads, in one-letter code: Protein-L-isoaspartate O-methyltransferase (211 aa).

Residue Ser-62 is part of the active site.

This sequence belongs to the methyltransferase superfamily. L-isoaspartyl/D-aspartyl protein methyltransferase family.

It localises to the cytoplasm. It catalyses the reaction [protein]-L-isoaspartate + S-adenosyl-L-methionine = [protein]-L-isoaspartate alpha-methyl ester + S-adenosyl-L-homocysteine. Catalyzes the methyl esterification of L-isoaspartyl residues in peptides and proteins that result from spontaneous decomposition of normal L-aspartyl and L-asparaginyl residues. It plays a role in the repair and/or degradation of damaged proteins. The chain is Protein-L-isoaspartate O-methyltransferase from Shewanella pealeana (strain ATCC 700345 / ANG-SQ1).